Reading from the N-terminus, the 288-residue chain is MTSKAMLYFSYTKPKVWSLLVFVGAIGAVIAIPYFNLHYISLIVLATIAVMLGSMGAEATTNYIDKDIDAVMSRTMKRPLVTGQIKPINGLLFGLVLMFLSIAILAAFGKLYAALFMGIGLFDNVFIYSYLTKRRTPWNIILGGFSGGFPVVIGWYTVTSKFSILPWFLFLLVVVWIPIHVWSLAYRYRDDYNRAHVPMMTSIHNDRISAICISSAAIILFAFSIIPAFFRVMPMVYMILASAIAVPMIFYSIVFVRHPDRKNSLKLFIYSSPYLAIIFVLVLIFRFL.

9 helical membrane passes run 16–36 (VWSL…PYFN), 37–57 (LHYI…SMGA), 88–108 (INGL…LAAF), 111–131 (LYAA…YSYL), 138–158 (WNII…WYTV), 162–182 (FSIL…IHVW), 210–230 (AICI…PAFF), 236–256 (VYMI…IVFV), and 265–285 (LKLF…VLIF).

This sequence belongs to the UbiA prenyltransferase family. Protoheme IX farnesyltransferase subfamily.

The protein localises to the cell membrane. It carries out the reaction heme b + (2E,6E)-farnesyl diphosphate + H2O = Fe(II)-heme o + diphosphate. It participates in porphyrin-containing compound metabolism; heme O biosynthesis; heme O from protoheme: step 1/1. Its function is as follows. Converts heme B (protoheme IX) to heme O by substitution of the vinyl group on carbon 2 of heme B porphyrin ring with a hydroxyethyl farnesyl side group. This is Protoheme IX farnesyltransferase from Thermoplasma acidophilum (strain ATCC 25905 / DSM 1728 / JCM 9062 / NBRC 15155 / AMRC-C165).